A 193-amino-acid chain; its full sequence is Probable GTP-binding protein EngB (193 aa).

Positions 22–193 (GLPEFAFAGR…LIAVLESYLA (172 aa)) constitute an EngB-type G domain. Residues 30–37 (GRSNVGKS), 57–61 (GKTQG), 75–78 (DLPG), 142–145 (TKID), and 173–175 (FSS) each bind GTP. Mg(2+) contacts are provided by Ser37 and Thr59.

It belongs to the TRAFAC class TrmE-Era-EngA-EngB-Septin-like GTPase superfamily. EngB GTPase family. The cofactor is Mg(2+).

In terms of biological role, necessary for normal cell division and for the maintenance of normal septation. The chain is Probable GTP-binding protein EngB from Desulfotalea psychrophila (strain LSv54 / DSM 12343).